Here is a 29-residue protein sequence, read N- to C-terminus: Beta-theraphotoxin-Gr1a (29 aa).

3 cysteine pairs are disulfide-bonded: cysteine 2-cysteine 16, cysteine 9-cysteine 21, and cysteine 15-cysteine 25.

The protein belongs to the neurotoxin 30 (phrixotoxin) family. As to expression, expressed by the venom gland.

The protein localises to the secreted. In terms of biological role, inhibits voltage-gated sodium channels Nav1.1/SCN1A (IC(50)=630 nM), Nav1.2/SCN2A (IC(50)=230 nM), Nav1.3/SCN3A (IC(50)=770 nM), Nav1.4/SCN4A (IC(50)=1290 nM), Nav1.6/SCN8A (IC(50)=630 nM), Nav1.7/SCN9A (IC(50)=15.3-1000 nM) and potassium channels Kv11.1/KCNH2 (IC(50)=4.2 uM). The chain is Beta-theraphotoxin-Gr1a from Grammostola rosea (Chilean rose tarantula).